Reading from the N-terminus, the 143-residue chain is Transcriptional regulator MraZ (143 aa).

2 SpoVT-AbrB domains span residues 5–47 (EYSH…PMAV) and 76–119 (ALEA…SAEN).

The protein belongs to the MraZ family. As to quaternary structure, forms oligomers.

Its subcellular location is the cytoplasm. The protein resides in the nucleoid. This is Transcriptional regulator MraZ from Leuconostoc mesenteroides subsp. mesenteroides (strain ATCC 8293 / DSM 20343 / BCRC 11652 / CCM 1803 / JCM 6124 / NCDO 523 / NBRC 100496 / NCIMB 8023 / NCTC 12954 / NRRL B-1118 / 37Y).